Consider the following 203-residue polypeptide: Probable flagellin 1 (203 aa).

A propeptide spanning residues 1–11 is cleaved from the precursor; it reads MGMRFLKNEKG.

Belongs to the archaeal flagellin family.

It is found in the archaeal flagellum. Its function is as follows. Flagellin is the subunit protein which polymerizes to form the filaments of archaeal flagella. The polypeptide is Probable flagellin 1 (flaB1) (Archaeoglobus fulgidus (strain ATCC 49558 / DSM 4304 / JCM 9628 / NBRC 100126 / VC-16)).